Here is a 742-residue protein sequence, read N- to C-terminus: Photosystem I P700 chlorophyll a apoprotein A2 2 (742 aa).

The next 8 membrane-spanning stretches (helical) occupy residues 46-69 (IFAT…FHVA), 135-158 (LYQG…LHLQ), 175-199 (LNHH…HVAI), 273-291 (MAHH…GHMY), 334-357 (LHFQ…QHMY), 373-399 (AALY…IFWI), 421-443 (AIIS…IYVH), and 524-542 (FLVH…LICV). 2 residues coordinate [4Fe-4S] cluster: C566 and C575. A run of 2 helical transmembrane segments spans residues 583 to 604 (SFYL…YWHW) and 651 to 673 (LSVW…MFLI). Chlorophyll a is bound by residues H662, M670, and Y678. W679 lines the phylloquinone pocket. A helical membrane pass occupies residues 715-735 (LVGLAHFTVGYILTYAAFLIA).

The protein belongs to the PsaA/PsaB family. As to quaternary structure, the PsaA/B heterodimer binds the P700 chlorophyll special pair and subsequent electron acceptors. PSI consists of a core antenna complex that captures photons, and an electron transfer chain that converts photonic excitation into a charge separation. The cyanobacterial PSI reaction center is composed of one copy each of PsaA,B,C,D,E,F,I,J,K,L,M and X, and forms trimeric complexes. PSI electron transfer chain: 5 chlorophyll a, 1 chlorophyll a', 2 phylloquinones and 3 4Fe-4S clusters. PSI core antenna: 90 chlorophyll a, 22 carotenoids, 3 phospholipids and 1 galactolipid. P700 is a chlorophyll a/chlorophyll a' dimer, A0 is one or more chlorophyll a, A1 is one or both phylloquinones and FX is a shared 4Fe-4S iron-sulfur center. serves as cofactor.

It is found in the cellular thylakoid membrane. The catalysed reaction is reduced [plastocyanin] + hnu + oxidized [2Fe-2S]-[ferredoxin] = oxidized [plastocyanin] + reduced [2Fe-2S]-[ferredoxin]. In terms of biological role, psaA and PsaB bind P700, the primary electron donor of photosystem I (PSI), as well as the electron acceptors A0, A1 and FX. PSI is a plastocyanin/cytochrome c6-ferredoxin oxidoreductase, converting photonic excitation into a charge separation, which transfers an electron from the donor P700 chlorophyll pair to the spectroscopically characterized acceptors A0, A1, FX, FA and FB in turn. Oxidized P700 is reduced on the lumenal side of the thylakoid membrane by plastocyanin or cytochrome c6. The protein is Photosystem I P700 chlorophyll a apoprotein A2 2 (psaB2) of Nostoc sp. (strain PCC 7120 / SAG 25.82 / UTEX 2576).